The chain runs to 468 residues: Factor XIIa inhibitor (468 aa).

An N-terminal signal peptide occupies residues 1 to 23 (MASRLTPLTLLLLLLLAGDRVTS). Positions 27 to 60 (VGPGNLQEGESEGDSQKGGILDGESIQGNEDSPT) are disordered. N-linked (GlcNAc...) asparagine glycans are attached at residues Asn-65, Asn-176, Asn-227, and Asn-326. 2 disulfide bridges follow: Cys-97–Cys-396 and Cys-104–Cys-179.

It belongs to the serpin family. In terms of processing, N- and O-glycosylated.

The protein localises to the secreted. Its function is as follows. May play a potentially crucial role in regulating important physiological pathways including complement activation, blood coagulation, fibrinolysis and the generation of kinins. This Bos taurus (Bovine) protein is Factor XIIa inhibitor.